The chain runs to 198 residues: Na(+)-translocating NADH-quinone reductase subunit E (198 aa).

6 helical membrane passes run 11 to 31 (AVFI…FLAV), 35 to 55 (VSPA…AVPV), 77 to 97 (FLNF…LEMV), 110 to 130 (GIFL…SFMV), 140 to 160 (IVYG…LAGL), and 176 to 196 (LGIT…FSGI).

Belongs to the NqrDE/RnfAE family. Composed of six subunits; NqrA, NqrB, NqrC, NqrD, NqrE and NqrF.

The protein resides in the cell inner membrane. It carries out the reaction a ubiquinone + n Na(+)(in) + NADH + H(+) = a ubiquinol + n Na(+)(out) + NAD(+). Its function is as follows. NQR complex catalyzes the reduction of ubiquinone-1 to ubiquinol by two successive reactions, coupled with the transport of Na(+) ions from the cytoplasm to the periplasm. NqrA to NqrE are probably involved in the second step, the conversion of ubisemiquinone to ubiquinol. The protein is Na(+)-translocating NADH-quinone reductase subunit E of Haemophilus influenzae (strain ATCC 51907 / DSM 11121 / KW20 / Rd).